The primary structure comprises 312 residues: Isethionate sulfite-lyase activating enzyme (312 aa).

Positions 20-304 constitute a Radical SAM core domain; sequence HDGPGIRTIV…GLQKTALDIL (285 aa). [4Fe-4S] cluster contacts are provided by Cys-34, Cys-38, Cys-41, Cys-60, Cys-66, Cys-69, Cys-73, Cys-93, Cys-96, Cys-100, and Cys-104. 40 to 42 contributes to the S-adenosyl-L-methionine binding site; the sequence is WCS. 2 4Fe-4S ferredoxin-type domains span residues 51 to 83 and 84 to 115; these read AELA…CGDD and DKPR…YGKK. Residues Gly-144, 193–195, and His-267 contribute to the S-adenosyl-L-methionine site; that span reads DIK.

The protein belongs to the organic radical-activating enzymes family. As to quaternary structure, monomer. Requires [4Fe-4S] cluster as cofactor.

The catalysed reaction is glycyl-[protein] + reduced [flavodoxin] + S-adenosyl-L-methionine = glycin-2-yl radical-[protein] + semiquinone [flavodoxin] + 5'-deoxyadenosine + L-methionine + H(+). It functions in the pathway organosulfur degradation; alkanesulfonate degradation. In terms of biological role, involved in an anaerobic respiration pathway that converts the sulfonate isethionate (2-hydroxyethanesulfonate) to ammonia, acetate and sulfide. Catalyzes activation of the isethionate sulfite-lyase IslA under anaerobic conditions by generation of an organic free radical on a glycine residue, via a homolytic cleavage of S-adenosyl-L-methionine (SAM). This Desulfovibrio desulfuricans (strain ATCC 27774 / DSM 6949 / MB) protein is Isethionate sulfite-lyase activating enzyme.